Consider the following 341-residue polypeptide: Phospholipid phosphatase homolog 1.2 homolog (341 aa).

The next 3 membrane-spanning stretches (helical) occupy residues 30–50 (LFIF…LLGV), 71–91 (ITAV…VLFV), and 122–142 (LLTY…LNIV). A glycan (N-linked (GlcNAc...) asparagine) is linked at Asn162. The next 2 membrane-spanning stretches (helical) occupy residues 223-243 (RIVV…ISFS) and 257-277 (VGIF…TDLF). 2 disordered regions span residues 284–308 (SETQ…ERHR) and 322–341 (FEAT…PQSA). Basic and acidic residues predominate over residues 299–308 (RNSEDEERHR).

It belongs to the PA-phosphatase related phosphoesterase family.

Its subcellular location is the membrane. This chain is Phospholipid phosphatase homolog 1.2 homolog, found in Caenorhabditis elegans.